The following is a 334-amino-acid chain: Putative B3 domain-containing protein At3g49610 (334 aa).

Disordered stretches follow at residues 69–89 (ERRTLGSSPTKTNTLFEGSEK) and 133–178 (DEFE…KFDP). 2 stretches are compositionally biased toward polar residues: residues 73 to 84 (LGSSPTKTNTLF) and 141 to 157 (KSPTIRNSQSSPSSCLM). Residues 161–173 (KRKRYQSSGKSKK) are compositionally biased toward basic residues. The segment at residues 229 to 334 (FNKLLRNDFL…GVLCFALEKE (106 aa)) is a DNA-binding region (TF-B3).

Its subcellular location is the nucleus. The protein is Putative B3 domain-containing protein At3g49610 of Arabidopsis thaliana (Mouse-ear cress).